The following is a 365-amino-acid chain: MFLKHLTIQNFRNHEELSLDFDSRLIFFVGDNGEGKTNLLEAICILSWLKSFRESEDSNLIRWGSENYFLRGKIKDNLKESVLEIGFTSKPSVKRKLKFNQEEIKKRTDLIGKFITVLLTPMDLKIIEGGPAERRKFIDAFISSFDPFYLESLLEYNKILKHRNALLKSGNPDISHLSIWDKKIVEKGIFILNKRREVVLELNSFYRVNLDKLSGGKDGLELIYKPNVKDQDEFLEKLNHNLSRDLRLGYTSVGIHRDDLFIGSDQRDITEFGSQGQKRSTVIALKAATFNYYKNILNTIPVLLIDDVIRELDVKRREYFVDLVVTAGQAFFTTTDLEGIQDYVGKLKDQKQIFLIRQGKVESIK.

Residue 30–37 (GDNGEGKT) coordinates ATP.

The protein belongs to the RecF family.

The protein localises to the cytoplasm. The RecF protein is involved in DNA metabolism; it is required for DNA replication and normal SOS inducibility. RecF binds preferentially to single-stranded, linear DNA. It also seems to bind ATP. This chain is DNA replication and repair protein RecF, found in Leptospira interrogans serogroup Icterohaemorrhagiae serovar Lai (strain 56601).